The sequence spans 334 residues: rRNA 2'-O-methyltransferase fibrillarin (334 aa).

The segment covering 1–93 (MEGRGGSRGG…GGKPAAGGKP (93 aa)) has biased composition (gly residues). A disordered region spans residues 1–94 (MEGRGGSRGG…GKPAAGGKPG (94 aa)). Residues 184–185 (TT), 203–204 (EL), 228–229 (DA), and 248–251 (DVAQ) contribute to the S-adenosyl-L-methionine site.

It belongs to the methyltransferase superfamily. Fibrillarin family. As to quaternary structure, component of box C/D small nucleolar ribonucleoprotein (snoRNP) particles. It is associated with the U3, U8 and U13 small nuclear RNAs. Part of the small subunit (SSU) processome, composed of more than 70 proteins and the RNA chaperone small nucleolar RNA (snoRNA) U3. Post-translationally, by homology to other fibrillarins, some or all of the N-terminal domain arginines are modified to asymmetric dimethylarginine (DMA).

Its subcellular location is the nucleus. The protein resides in the nucleolus. It catalyses the reaction L-glutaminyl-[histone H2A] + S-adenosyl-L-methionine = N(5)-methyl-L-glutaminyl-[histone H2A] + S-adenosyl-L-homocysteine + H(+). In terms of biological role, S-adenosyl-L-methionine-dependent methyltransferase that has the ability to methylate both RNAs and proteins. Involved in pre-rRNA processing. Utilizes the methyl donor S-adenosyl-L-methionine to catalyze the site-specific 2'-hydroxyl methylation of ribose moieties in pre-ribosomal RNA. Site specificity is provided by a guide RNA that base pairs with the substrate. Methylation occurs at a characteristic distance from the sequence involved in base pairing with the guide RNA. Also acts as a protein methyltransferase by mediating methylation of 'Gln-105' of histone H2A (H2AQ105me), a modification that impairs binding of the FACT complex and is specifically present at 35S ribosomal DNA locus. Part of the small subunit (SSU) processome, first precursor of the small eukaryotic ribosomal subunit. During the assembly of the SSU processome in the nucleolus, many ribosome biogenesis factors, an RNA chaperone and ribosomal proteins associate with the nascent pre-rRNA and work in concert to generate RNA folding, modifications, rearrangements and cleavage as well as targeted degradation of pre-ribosomal RNA by the RNA exosome. This chain is rRNA 2'-O-methyltransferase fibrillarin (fbl), found in Dictyostelium discoideum (Social amoeba).